The sequence spans 189 residues: Chitin synthase 2 (189 aa).

Belongs to the chitin synthase family. Class II subfamily.

The protein localises to the cell membrane. It carries out the reaction [(1-&gt;4)-N-acetyl-beta-D-glucosaminyl](n) + UDP-N-acetyl-alpha-D-glucosamine = [(1-&gt;4)-N-acetyl-beta-D-glucosaminyl](n+1) + UDP + H(+). Its function is as follows. Polymerizes chitin, a structural polymer of the cell wall and septum, by transferring the sugar moiety of UDP-GlcNAc to the non-reducing end of the growing chitin polymer. The chain is Chitin synthase 2 (CHS2) from Ajellomyces dermatitidis (Blastomyces dermatitidis).